We begin with the raw amino-acid sequence, 858 residues long: Polyhomeotic-like protein 2 (858 aa).

6 disordered regions span residues 1–76, 230–307, 337–388, 407–444, 473–493, and 529–561; these read MENE…QYLQ, QQTP…MEGR, PQPS…VALQ, LQCP…PHTP, KEVA…SPHQ, and TDLS…KPPQ. Low complexity-rich tracts occupy residues 10 to 34 and 230 to 241; these read TSSS…NSSS and QQTPAAAASGPT. Positions 33-53 are interaction with BMI1; it reads SSGGSGRPTGPQISVYSGIPD. A compositionally biased stretch (polar residues) spans 265-274; it reads PAQSRNTAQA. The span at 337-358 shows a compositional bias: low complexity; that stretch reads PQPSSKHLQPQFVIQQQPQPQQ. Residues 379-388 show a composition bias toward polar residues; sequence ASVSPSVALQ. Basic and acidic residues predominate over residues 473-483; sequence KEVAPGEKSVP. A compositionally biased stretch (low complexity) spans 537–551; that stretch reads TSGNGNSASSIAGTA. The HD1 motif lies at 558–587; the sequence is KPPQAIVKPQILTHVIEGFVIQEGAEPFPV. Residues Lys598 and Lys600 each participate in a glycyl lysine isopeptide (Lys-Gly) (interchain with G-Cter in SUMO2) cross-link. Residue Thr619 is modified to Phosphothreonine. The residue at position 621 (Ser621) is a Phosphoserine. Lys632 participates in a covalent cross-link: Glycyl lysine isopeptide (Lys-Gly) (interchain with G-Cter in SUMO2). The segment at 633 to 667 adopts an FCS-type zinc-finger fold; that stretch reads EEGAPLKLKCELCGRVDFAYKFKRSKRFCSMACAK. The Zn(2+) site is built by Cys642, Cys645, Cys661, and Cys665. 2 disordered regions span residues 688–720 and 732–768; these read QKAG…TGTV and HSQE…GQRD. Residue Lys702 forms a Glycyl lysine isopeptide (Lys-Gly) (interchain with G-Cter in SUMO2) linkage. Ser751 bears the Phosphoserine mark. One can recognise an SAM domain in the interval 794–858; sequence WNVEDVYEFI…YARISMLKDS (65 aa). Lys847 participates in a covalent cross-link: Glycyl lysine isopeptide (Lys-Gly) (interchain with G-Cter in SUMO2).

Component of a PRC1-like complex. Interacts with CBX4. Interacts with BMI1, PCGF2, PHC1 and RNF2. Interacts with CHTOP. Interacts with the N-terminal region of the SP1 transcription factor and with MAPKAPK2. Interacts with SAMD7 and SAMD11.

The protein localises to the nucleus. Functionally, component of a Polycomb group (PcG) multiprotein PRC1-like complex, a complex class required to maintain the transcriptionally repressive state of many genes, including Hox genes, throughout development. PcG PRC1 complex acts via chromatin remodeling and modification of histones; it mediates monoubiquitination of histone H2A 'Lys-119', rendering chromatin heritably changed in its expressibility. The polypeptide is Polyhomeotic-like protein 2 (PHC2) (Homo sapiens (Human)).